The sequence spans 400 residues: Acetate kinase (400 aa).

Position 9 (asparagine 9) interacts with Mg(2+). Lysine 16 contacts ATP. Arginine 90 lines the substrate pocket. Aspartate 147 functions as the Proton donor/acceptor in the catalytic mechanism. Residues 207-211 (HIGNG), 282-284 (DLR), and 330-334 (GIGEN) each bind ATP. Mg(2+) is bound at residue glutamate 385.

This sequence belongs to the acetokinase family. In terms of assembly, homodimer. Mg(2+) serves as cofactor. Requires Mn(2+) as cofactor.

The protein localises to the cytoplasm. The catalysed reaction is acetate + ATP = acetyl phosphate + ADP. It participates in metabolic intermediate biosynthesis; acetyl-CoA biosynthesis; acetyl-CoA from acetate: step 1/2. In terms of biological role, catalyzes the formation of acetyl phosphate from acetate and ATP. Can also catalyze the reverse reaction. This chain is Acetate kinase, found in Staphylococcus aureus (strain Mu3 / ATCC 700698).